A 185-amino-acid polypeptide reads, in one-letter code: Ribosome-recycling factor (185 aa).

The protein belongs to the RRF family.

It localises to the cytoplasm. Its function is as follows. Responsible for the release of ribosomes from messenger RNA at the termination of protein biosynthesis. May increase the efficiency of translation by recycling ribosomes from one round of translation to another. The chain is Ribosome-recycling factor from Shewanella sp. (strain MR-4).